The following is a 101-amino-acid chain: Small ribosomal subunit protein uS14 (101 aa).

The protein belongs to the universal ribosomal protein uS14 family. Part of the 30S ribosomal subunit. Contacts proteins S3 and S10.

Functionally, binds 16S rRNA, required for the assembly of 30S particles and may also be responsible for determining the conformation of the 16S rRNA at the A site. The polypeptide is Small ribosomal subunit protein uS14 (Vibrio vulnificus (strain CMCP6)).